A 932-amino-acid polypeptide reads, in one-letter code: Valine--tRNA ligase (932 aa).

Residues 75 to 85 (PNVTGQLHMGH) carry the 'HIGH' region motif. The 'KMSKS' region motif lies at 568–572 (KMSKS). Lys571 is an ATP binding site. A coiled-coil region spans residues 863-929 (TVDVAAERKR…ERITARLEGL (67 aa)).

Belongs to the class-I aminoacyl-tRNA synthetase family. ValS type 1 subfamily. As to quaternary structure, monomer.

The protein resides in the cytoplasm. It carries out the reaction tRNA(Val) + L-valine + ATP = L-valyl-tRNA(Val) + AMP + diphosphate. Its function is as follows. Catalyzes the attachment of valine to tRNA(Val). As ValRS can inadvertently accommodate and process structurally similar amino acids such as threonine, to avoid such errors, it has a 'posttransfer' editing activity that hydrolyzes mischarged Thr-tRNA(Val) in a tRNA-dependent manner. This chain is Valine--tRNA ligase, found in Corynebacterium jeikeium (strain K411).